The primary structure comprises 616 residues: Sulfite reductase [NADPH] hemoprotein beta-component (616 aa).

The span at 1 to 10 (MDDHSPRDAA) shows a compositional bias: basic and acidic residues. The tract at residues 1-35 (MDDHSPRDAAETPAPGPAATPAKRVYETPPTSRPI) is disordered. The span at 11–22 (ETPAPGPAATPA) shows a compositional bias: low complexity. Cys-470, Cys-476, Cys-515, and Cys-519 together coordinate [4Fe-4S] cluster. Residue Cys-519 coordinates siroheme.

Belongs to the nitrite and sulfite reductase 4Fe-4S domain family. Alpha(8)-beta(8). The alpha component is a flavoprotein, the beta component is a hemoprotein. The cofactor is siroheme. Requires [4Fe-4S] cluster as cofactor.

The enzyme catalyses hydrogen sulfide + 3 NADP(+) + 3 H2O = sulfite + 3 NADPH + 4 H(+). Its pathway is sulfur metabolism; hydrogen sulfide biosynthesis; hydrogen sulfide from sulfite (NADPH route): step 1/1. In terms of biological role, component of the sulfite reductase complex that catalyzes the 6-electron reduction of sulfite to sulfide. This is one of several activities required for the biosynthesis of L-cysteine from sulfate. The polypeptide is Sulfite reductase [NADPH] hemoprotein beta-component (Methylobacterium radiotolerans (strain ATCC 27329 / DSM 1819 / JCM 2831 / NBRC 15690 / NCIMB 10815 / 0-1)).